The following is a 566-amino-acid chain: NXPE family member 3 (566 aa).

Residues 1-32 (MEKYFPKYVPFFSLLALSGLLYLLWSITSLES) form the signal peptide. N64, N172, N242, N303, and N344 each carry an N-linked (GlcNAc...) asparagine glycan.

Belongs to the NXPE family.

The protein localises to the secreted. The chain is NXPE family member 3 (nxpe3) from Danio rerio (Zebrafish).